A 320-amino-acid chain; its full sequence is Heterogeneous nuclear ribonucleoprotein A1 (320 aa).

N-acetylmethionine is present on methionine 1. Residue serine 2 is modified to N-acetylserine; in Heterogeneous nuclear ribonucleoprotein A1, N-terminally processed. Phosphoserine is present on serine 2. Lysine 3 carries the post-translational modification N6-acetyllysine; alternate. Lysine 3 is covalently cross-linked (Glycyl lysine isopeptide (Lys-Gly) (interchain with G-Cter in SUMO2); alternate). 2 positions are modified to phosphoserine: serine 4 and serine 6. The interval 4–94 (SESPKEPEQL…EPKRAVSRED (91 aa)) is globular A domain. Lysine 8 is covalently cross-linked (Glycyl lysine isopeptide (Lys-Gly) (interchain with G-Cter in SUMO2)). RRM domains lie at 14 to 97 (RKLF…DSQR) and 105 to 184 (KKIF…LSKQ). Serine 22 bears the Phosphoserine mark. A Glycyl lysine isopeptide (Lys-Gly) (interchain with G-Cter in SUMO2) cross-link involves residue lysine 78. Residues 95 to 185 (SQRPGAHLTV…EVRKALSKQE (91 aa)) are globular B domain. Lysine 113 is covalently cross-linked (Glycyl lysine isopeptide (Lys-Gly) (interchain with G-Cter in SUMO)). Glycyl lysine isopeptide (Lys-Gly) (interchain with G-Cter in SUMO2) cross-links involve residues lysine 179 and lysine 183. The disordered stretch occupies residues 182–216 (SKQEMASASSSQRGRSGSGNFGGGRGGGFGGNDNF). A Phosphoserine; by MKNK2 modification is found at serine 192. Arginine 194 carries the asymmetric dimethylarginine; alternate modification. Residue arginine 194 is modified to Dimethylated arginine; alternate. Arginine 194 carries the omega-N-methylarginine; alternate modification. The span at 197–216 (SGSGNFGGGRGGGFGGNDNF) shows a compositional bias: gly residues. Serine 199 carries the post-translational modification Phosphoserine. Arginine 206, arginine 218, arginine 225, and arginine 232 each carry asymmetric dimethylarginine; alternate. Arginine 206 carries the dimethylated arginine; alternate modification. Omega-N-methylarginine; alternate is present on residues arginine 206, arginine 218, arginine 225, and arginine 232. Positions 218–240 (RGGNFSGRGGFGGSRGGGGYGGS) are RNA-binding RGG-box. Arginine 225 carries the post-translational modification Dimethylated arginine; alternate. The nuclear targeting sequence stretch occupies residues 268–305 (NQSSNFGPMKGGNFGGRSSGPYGGGGQYFAKPRNQGGY). The disordered stretch occupies residues 274 to 320 (GPMKGGNFGGRSSGPYGGGGQYFAKPRNQGGYGGSSSSSSYGSGRRF). Positions 276 to 294 (MKGGNFGGRSSGPYGGGGQ) are enriched in gly residues. An Omega-N-methylarginine modification is found at arginine 284. Serine 285 carries the phosphoserine modification. At lysine 298 the chain carries N6-acetyllysine; alternate. Lysine 298 is covalently cross-linked (Glycyl lysine isopeptide (Lys-Gly) (interchain with G-Cter in SUMO2); alternate). Arginine 300 bears the Omega-N-methylarginine mark. Positions 308-320 (SSSSSSYGSGRRF) are enriched in low complexity. Serine 309 is subject to Phosphoserine. Serine 310, serine 311, and serine 312 each carry phosphoserine; by MKNK2. A phosphoserine mark is found at serine 313 and serine 316. Omega-N-methylarginine is present on arginine 318.

As to quaternary structure, identified in the spliceosome C complex. Identified in a IGF2BP1-dependent mRNP granule complex containing untranslated mRNAs. Interacts with SEPT6. Interacts with C9orf72. Interacts with KHDRBS1. Interacts with UBQLN2. Interacts with PPIA/CYPA. Post-translationally, sumoylated.

The protein localises to the nucleus. It localises to the cytoplasm. Functionally, involved in the packaging of pre-mRNA into hnRNP particles, transport of poly(A) mRNA from the nucleus to the cytoplasm and modulation of splice site selection. Plays a role in the splicing of pyruvate kinase PKM by binding repressively to sequences flanking PKM exon 9, inhibiting exon 9 inclusion and resulting in exon 10 inclusion and production of the PKM M2 isoform. Binds to the IRES and thereby inhibits the translation of the apoptosis protease activating factor APAF1. May bind to specific miRNA hairpins. The polypeptide is Heterogeneous nuclear ribonucleoprotein A1 (Hnrnpa1) (Mus musculus (Mouse)).